We begin with the raw amino-acid sequence, 436 residues long: Eukaryotic peptide chain release factor subunit 1-1 (436 aa).

This sequence belongs to the eukaryotic release factor 1 family. In terms of assembly, heterodimer of two subunits, one of which binds GTP.

It is found in the cytoplasm. Directs the termination of nascent peptide synthesis (translation) in response to the termination codons UAA, UAG and UGA. Modulates plant growth and development. The chain is Eukaryotic peptide chain release factor subunit 1-1 (ERF1-1) from Arabidopsis thaliana (Mouse-ear cress).